Here is a 960-residue protein sequence, read N- to C-terminus: Probable RNA-binding protein 19 (960 aa).

Residues 2–79 (SRLIVKNLPN…SRITVEFCKS (78 aa)) form the RRM 1 domain. 2 disordered regions span residues 85 to 119 (KPRAWSKHAQKPSQPKQPPKDSTTPEIKKDEKKKK) and 149 to 294 (WAND…TTCH). Residues serine 174, serine 176, and serine 180 each carry the phosphoserine modification. The segment covering 176–194 (SGQESEEEGAGEDLEEEAS) has biased composition (acidic residues). Residues 273–286 (RPPEARAETEKPAN) show a composition bias toward basic and acidic residues. 2 RRM domains span residues 294–369 (HTVK…REKN) and 402–480 (GRLF…PSTI). Lysine 481 participates in a covalent cross-link: Glycyl lysine isopeptide (Lys-Gly) (interchain with G-Cter in SUMO2). A disordered region spans residues 491–513 (LGSSSYKKKKEAQDKANSASSHN). In terms of domain architecture, RRM 4 spans 587–659 (TVILVKNLPA…VPLYLEWAPV (73 aa)). The tract at residues 667 to 729 (PQKKKLQDTP…EEEEEESLPG (63 aa)) is disordered. Composition is skewed to acidic residues over residues 689–706 (TVPDGETPEDENPTEEGA) and 714–726 (EEEEEEEEEEEES). 2 RRM domains span residues 730-811 (CTLF…ISER) and 832-912 (SKIL…WADS). Serine 936, serine 949, and serine 951 each carry phosphoserine.

This sequence belongs to the RRM MRD1 family. In terms of tissue distribution, expressed in the crypts of Lieberkuhn of the intestine and in intestinal neoplasia (at protein level).

It is found in the nucleus. The protein localises to the nucleolus. The protein resides in the nucleoplasm. Its subcellular location is the cytoplasm. It localises to the chromosome. In terms of biological role, plays a role in embryo pre-implantation development. This Homo sapiens (Human) protein is Probable RNA-binding protein 19 (RBM19).